Reading from the N-terminus, the 674-residue chain is Probable protein phosphatase 2C 66 (674 aa).

Phosphoserine is present on serine 125. Disordered stretches follow at residues 153-175 (YSGP…RKKP) and 202-247 (KSVI…KQSM). One can recognise a PPM-type phosphatase domain in the interval 244–665 (KQSMNSVLDV…DDVSVIVISL (422 aa)). Mn(2+) contacts are provided by aspartate 282 and glycine 283. A compositionally biased stretch (basic and acidic residues) spans 373 to 384 (NNKTKSDNRCDQ). A disordered region spans residues 373-392 (NNKTKSDNRCDQKGSNSTTT). Residues aspartate 593 and aspartate 656 each contribute to the Mn(2+) site.

It belongs to the PP2C family. Requires Mg(2+) as cofactor. Mn(2+) is required as a cofactor. Expressed at low level in seedlings, roots, leaves, stems, young inflorescences, flowers and siliques.

It localises to the nucleus. The enzyme catalyses O-phospho-L-seryl-[protein] + H2O = L-seryl-[protein] + phosphate. It carries out the reaction O-phospho-L-threonyl-[protein] + H2O = L-threonyl-[protein] + phosphate. This is Probable protein phosphatase 2C 66 (PLL2) from Arabidopsis thaliana (Mouse-ear cress).